A 74-amino-acid chain; its full sequence is Peptide BmKa2 (74 aa).

A signal peptide spans 1-24 (MSSKTLLVLLLVGVLVSTFFTADA).

Belongs to the non-disulfide-bridged peptide (NDBP) superfamily. Long chain multifunctional peptide (group 2) family. Expressed by the venom gland.

It is found in the secreted. Its function is as follows. Highly acidic peptide that may have antibacterial activity. The protein is Peptide BmKa2 of Olivierus martensii (Manchurian scorpion).